A 252-amino-acid polypeptide reads, in one-letter code: 3-dehydroquinate dehydratase (252 aa).

Residues serine 21, 46 to 48, and arginine 82 contribute to the 3-dehydroquinate site; that span reads EWR. Histidine 143 (proton donor/acceptor) is an active-site residue. The active-site Schiff-base intermediate with substrate is the lysine 170. Residues arginine 213, serine 232, and glutamine 236 each coordinate 3-dehydroquinate.

The protein belongs to the type-I 3-dehydroquinase family. In terms of assembly, homodimer.

The enzyme catalyses 3-dehydroquinate = 3-dehydroshikimate + H2O. The protein operates within metabolic intermediate biosynthesis; chorismate biosynthesis; chorismate from D-erythrose 4-phosphate and phosphoenolpyruvate: step 3/7. Its function is as follows. Involved in the third step of the chorismate pathway, which leads to the biosynthesis of aromatic amino acids. Catalyzes the cis-dehydration of 3-dehydroquinate (DHQ) and introduces the first double bond of the aromatic ring to yield 3-dehydroshikimate. The polypeptide is 3-dehydroquinate dehydratase (Shigella dysenteriae).